The following is a 142-amino-acid chain: 3-hydroxyacyl-[acyl-carrier-protein] dehydratase FabZ (142 aa).

The active site involves histidine 49.

This sequence belongs to the thioester dehydratase family. FabZ subfamily.

Its subcellular location is the cytoplasm. The catalysed reaction is a (3R)-hydroxyacyl-[ACP] = a (2E)-enoyl-[ACP] + H2O. In terms of biological role, involved in unsaturated fatty acids biosynthesis. Catalyzes the dehydration of short chain beta-hydroxyacyl-ACPs and long chain saturated and unsaturated beta-hydroxyacyl-ACPs. The sequence is that of 3-hydroxyacyl-[acyl-carrier-protein] dehydratase FabZ from Deinococcus geothermalis (strain DSM 11300 / CIP 105573 / AG-3a).